A 597-amino-acid chain; its full sequence is uncharacterized protein (597 aa).

Residues 48-198 (LHPYNPYSSL…DSILSLTKET (151 aa)) enclose the Helicase ATP-binding domain. 61-68 (YDVGLGKT) is an ATP binding site. A DEVH box motif is present at residues 146-149 (DEVH). A Helicase C-terminal domain is found at 275–467 (KINAFINSIK…DIPKIDNEMV (193 aa)).

The protein belongs to the helicase family.

The presence of the two linear plasmids, termed pGKL1 and pGKL2, in strains of Kluyveromyces lactis confers the killer phenotype to the host cell, by promoting the secretion of a toxin able to inhibit the growth of sensitive strains. This is an uncharacterized protein from Kluyveromyces lactis (strain ATCC 8585 / CBS 2359 / DSM 70799 / NBRC 1267 / NRRL Y-1140 / WM37) (Yeast).